We begin with the raw amino-acid sequence, 813 residues long: Ubiquitin carboxyl-terminal hydrolase 45 (813 aa).

Residues 1–14 show a composition bias toward basic and acidic residues; sequence MRVKDPSKDLPEKG. The disordered stretch occupies residues 1-27; sequence MRVKDPSKDLPEKGKRNKRPLLPHDED. The interaction with ERCC1 stretch occupies residues 1 to 62; that stretch reads MRVKDPSKDL…AVAESLWSVC (62 aa). Phosphoserine occurs at positions 28 and 29. The UBP-type zinc-finger motif lies at 36–153; sequence LTCQHVSYAV…AQIVDFLQKH (118 aa). C38, H40, C62, C65, C85, C88, C93, H101, H105, H114, C127, and C130 together coordinate Zn(2+). The USP domain maps to 191 to 812; sequence KGITNLGNTC…QAYLLFYERI (622 aa). Residue C200 is the Nucleophile of the active site. Composition is skewed to basic and acidic residues over residues 405-414 and 450-466; these read LQETDQDHNK and WPSEEEKTVVTHPKNDN. Residues 405–552 are disordered; that stretch reads LQETDQDHNK…QAKETHGGEE (148 aa). Over residues 472-488 the composition is skewed to polar residues; the sequence is PASTLSTEASLNESLTD. S507 and S525 each carry phosphoserine. Basic and acidic residues predominate over residues 521-533; that stretch reads SRGDSCGHAEQHP. H745 acts as the Proton acceptor in catalysis.

This sequence belongs to the peptidase C19 family. In terms of assembly, interacts with ERCC1. The catalytically active form interacts with SPDL1. Retina.

It is found in the photoreceptor inner segment. The protein localises to the cytoplasm. The protein resides in the nucleus. The catalysed reaction is Thiol-dependent hydrolysis of ester, thioester, amide, peptide and isopeptide bonds formed by the C-terminal Gly of ubiquitin (a 76-residue protein attached to proteins as an intracellular targeting signal).. Functionally, catalyzes the deubiquitination of SPDL1. Plays a role in the repair of UV-induced DNA damage via deubiquitination of ERCC1, promoting its recruitment to DNA damage sites. May be involved in the maintenance of photoreceptor function. May play a role in normal retinal development. Plays a role in cell migration. This is Ubiquitin carboxyl-terminal hydrolase 45 (Usp45) from Mus musculus (Mouse).